The sequence spans 391 residues: NADH-quinone oxidoreductase subunit D (391 aa).

This sequence belongs to the complex I 49 kDa subunit family. NDH-1 is composed of 14 different subunits. Subunits NuoB, C, D, E, F, and G constitute the peripheral sector of the complex.

The protein localises to the cell inner membrane. The catalysed reaction is a quinone + NADH + 5 H(+)(in) = a quinol + NAD(+) + 4 H(+)(out). Functionally, NDH-1 shuttles electrons from NADH, via FMN and iron-sulfur (Fe-S) centers, to quinones in the respiratory chain. The immediate electron acceptor for the enzyme in this species is believed to be ubiquinone. Couples the redox reaction to proton translocation (for every two electrons transferred, four hydrogen ions are translocated across the cytoplasmic membrane), and thus conserves the redox energy in a proton gradient. The sequence is that of NADH-quinone oxidoreductase subunit D from Rickettsia felis (strain ATCC VR-1525 / URRWXCal2) (Rickettsia azadi).